The chain runs to 154 residues: Large ribosomal subunit protein bL19 (154 aa).

The disordered stretch occupies residues 1-33; sequence MAADPKDTTVTDENTETAATAEVETVASAPTSP. Residues 16 to 27 are compositionally biased toward low complexity; sequence ETAATAEVETVA.

This sequence belongs to the bacterial ribosomal protein bL19 family.

This protein is located at the 30S-50S ribosomal subunit interface and may play a role in the structure and function of the aminoacyl-tRNA binding site. The sequence is that of Large ribosomal subunit protein bL19 from Parasynechococcus marenigrum (strain WH8102).